We begin with the raw amino-acid sequence, 183 residues long: Acireductone dioxygenase (183 aa).

Residues H95, H97, E101, and H139 each contribute to the Fe(2+) site. Ni(2+)-binding residues include H95, H97, E101, and H139.

The protein belongs to the acireductone dioxygenase (ARD) family. As to quaternary structure, monomer. It depends on Fe(2+) as a cofactor. Ni(2+) is required as a cofactor.

It carries out the reaction 1,2-dihydroxy-5-(methylsulfanyl)pent-1-en-3-one + O2 = 3-(methylsulfanyl)propanoate + CO + formate + 2 H(+). The enzyme catalyses 1,2-dihydroxy-5-(methylsulfanyl)pent-1-en-3-one + O2 = 4-methylsulfanyl-2-oxobutanoate + formate + 2 H(+). It functions in the pathway amino-acid biosynthesis; L-methionine biosynthesis via salvage pathway; L-methionine from S-methyl-5-thio-alpha-D-ribose 1-phosphate: step 5/6. In terms of biological role, catalyzes 2 different reactions between oxygen and the acireductone 1,2-dihydroxy-3-keto-5-methylthiopentene (DHK-MTPene) depending upon the metal bound in the active site. Fe-containing acireductone dioxygenase (Fe-ARD) produces formate and 2-keto-4-methylthiobutyrate (KMTB), the alpha-ketoacid precursor of methionine in the methionine recycle pathway. Ni-containing acireductone dioxygenase (Ni-ARD) produces methylthiopropionate, carbon monoxide and formate, and does not lie on the methionine recycle pathway. In Hydrogenobaculum sp. (strain Y04AAS1), this protein is Acireductone dioxygenase.